We begin with the raw amino-acid sequence, 562 residues long: Arginine--tRNA ligase (562 aa).

Positions 129–139 (ANPTGPLHVGH) match the 'HIGH' region motif.

Belongs to the class-I aminoacyl-tRNA synthetase family. As to quaternary structure, monomer.

Its subcellular location is the cytoplasm. The enzyme catalyses tRNA(Arg) + L-arginine + ATP = L-arginyl-tRNA(Arg) + AMP + diphosphate. In Xanthomonas oryzae pv. oryzae (strain KACC10331 / KXO85), this protein is Arginine--tRNA ligase.